The following is a 457-amino-acid chain: Peptidyl-prolyl cis-trans isomerase FKBP5 (457 aa).

Position 1 is an N-acetylmethionine (methionine 1). Positions 1–26 are disordered; sequence MTTDEGAKNSRGNPAATVAEQGEDVT. Lysine 28 carries the N6-acetyllysine modification. PPIase FKBP-type domains follow at residues 50-138 and 165-251; these read GDRV…LDFK and GARV…KSFE. TPR repeat units lie at residues 268-301, 317-350, and 351-384; these read AAIVKEKGTVYFKGGKYVQAVIQYGKIVSWLEME, LAAFLNLAMCYLKLREYTKAVECCDKALGLDSAN, and EKGLYRRGEAQLLMNEFESAKGDFEKVLEVNPQN. Residues 421-457 form a disordered region; that stretch reads AKEEANKAMSKKTSEGVTNEKLTASHAVEEEKPEGHV. At serine 445 the chain carries Phosphoserine. Over residues 447 to 457 the composition is skewed to basic and acidic residues; the sequence is AVEEEKPEGHV.

As to quaternary structure, part of a heteromultimeric cytoplasmic complex with HSP90AA1, HSPA1A/HSPA1B and steroid receptors. Upon ligand binding dissociates from the complex and FKBP4 takes its place. Interacts with functionally mature heterooligomeric progesterone receptor complexes along with HSP90 and TEBP. Interacts with NR3C1. Interacts with Akt/AKT1 and PHLPP1; enhancing dephosphorylation and subsequent activation of Akt/AKT1. Interacts with IFI44L; this interaction modulates the kinase activity of IKBKB and IKBKE. Interacts with IKBKB and IKBKE. Acetylation impairs ability to promote interaction between Akt/AKT1 and PHLPP1. Deacetylation by SIRT7 promotes interaction between Akt/AKT1 and PHLPP1, leading to suppress Akt/AKT1 activation. In terms of processing, ubiquitinated, leading to degradation in a proteasome-dependent manner. Deubiquitinated by USP49, leading to stabilization.

The protein localises to the cytoplasm. Its subcellular location is the nucleus. It carries out the reaction [protein]-peptidylproline (omega=180) = [protein]-peptidylproline (omega=0). Inhibited by both FK506 and rapamycin. Its function is as follows. Immunophilin protein with PPIase and co-chaperone activities. Component of unligated steroid receptors heterocomplexes through interaction with heat-shock protein 90 (HSP90). Plays a role in the intracellular trafficking of heterooligomeric forms of steroid hormone receptors maintaining the complex into the cytoplasm when unliganded. Acts as a regulator of Akt/AKT1 activity by promoting the interaction between Akt/AKT1 and PHLPP1, thereby enhancing dephosphorylation and subsequent activation of Akt/AKT1. Interacts with IKBKE and IKBKB which facilitates IKK complex assembly leading to increased IKBKE and IKBKB kinase activity, NF-kappaB activation, and IFN production. The protein is Peptidyl-prolyl cis-trans isomerase FKBP5 (FKBP5) of Saimiri boliviensis boliviensis (Bolivian squirrel monkey).